A 573-amino-acid polypeptide reads, in one-letter code: DEAD-box ATP-dependent RNA helicase 47A (573 aa).

The short motif at 131-159 is the Q motif element; the sequence is KSFEELGLPPLLIDRLNKEGLTAPTEVQS. The Helicase ATP-binding domain maps to 162 to 362; the sequence is IPIISQKHDA…RSWGHDPVLV (201 aa). 175–182 is an ATP binding site; sequence SYTGSGKT. The DEAD box motif lies at 293–296; sequence DEVD. Positions 421–565 constitute a Helicase C-terminal domain; sequence TLRRCIHALE…PCEFTEGKLL (145 aa).

Belongs to the DEAD box helicase family.

It catalyses the reaction ATP + H2O = ADP + phosphate + H(+). This chain is DEAD-box ATP-dependent RNA helicase 47A, found in Oryza sativa subsp. japonica (Rice).